Consider the following 222-residue polypeptide: Protein ORM1 (222 aa).

Positions 1–57 (MTELDYQGTAEAASTSYSRNQTDLKPFPSAGSASSSIKTTEPVKDHRRRRSSSIISH) are disordered. At 1-85 (MTELDYQGTA…NATWVDQRGA (85 aa)) the chain is on the cytoplasmic side. The segment covering 12-23 (AASTSYSRNQTD) has biased composition (polar residues). Residues serine 29, serine 32, and serine 56 each carry the phosphoserine modification. Residues 86 to 106 (WIIHVVIIILLKLFYNLFPGV) form a helical membrane-spanning segment. Residues 107-109 (TTE) lie on the Extracellular side of the membrane. A helical membrane pass occupies residues 110 to 130 (WSWTLTNMTYVIGSYVMFHLI). At 131–162 (KGTPFDFNGGAYDNLTMWEQIDDETLYTPSRK) the chain is on the cytoplasmic side. A helical transmembrane segment spans residues 163–183 (FLISVPIALFLVSTHYAHYDL). Residue lysine 184 is a topological domain, extracellular. The helical transmembrane segment at 185–205 (LFSWNCFLTTFGAVVPKLPVT) threads the bilayer. The Cytoplasmic portion of the chain corresponds to 206–222 (HRLRISIPGITGRAQIS).

This sequence belongs to the ORM family. Component of the SPOTS complex, at least composed of LCB1/2 (LCB1 and/or LCB2), ORM1/2 (ORM1 and/or ORM2), SAC1 and TSC3. Post-translationally, phosphorylated in case of disruption of sphingolipid synthesis. Phosphorylation regulates inhibitory activity of serine palmitoyltransferases (LCB1 and LCB2).

The protein localises to the endoplasmic reticulum membrane. In terms of biological role, component of the SPOTS complex that acts as a negative regulator of sphingolipid synthesis. Acts by inhibiting serine palmitoyltransferases (LCB1 and LCB2) activity. Along with ORM2, plays a role in the phosphorylation of LAC1 and YPK1, the distribution of actin patches between mother and daughter cells, and in endocytosis. Disruption or inhibition of sphingolipid synthesis leads to the activation and phosphorylation of YPK1 through the TORC2 and PKH1 pathways, which in turn phosphorylates ORM1 and LAG1 to activate sphingolipid synthesis. The chain is Protein ORM1 (ORM1) from Saccharomyces cerevisiae (strain ATCC 204508 / S288c) (Baker's yeast).